We begin with the raw amino-acid sequence, 167 residues long: NAD(P)H-quinone oxidoreductase subunit J (167 aa).

The protein belongs to the complex I 30 kDa subunit family. NDH-1 can be composed of about 15 different subunits; different subcomplexes with different compositions have been identified which probably have different functions.

It localises to the cellular thylakoid membrane. It catalyses the reaction a plastoquinone + NADH + (n+1) H(+)(in) = a plastoquinol + NAD(+) + n H(+)(out). The enzyme catalyses a plastoquinone + NADPH + (n+1) H(+)(in) = a plastoquinol + NADP(+) + n H(+)(out). Functionally, NDH-1 shuttles electrons from an unknown electron donor, via FMN and iron-sulfur (Fe-S) centers, to quinones in the respiratory and/or the photosynthetic chain. The immediate electron acceptor for the enzyme in this species is believed to be plastoquinone. Couples the redox reaction to proton translocation, and thus conserves the redox energy in a proton gradient. Cyanobacterial NDH-1 also plays a role in inorganic carbon-concentration. The protein is NAD(P)H-quinone oxidoreductase subunit J of Microcystis aeruginosa (strain NIES-843 / IAM M-2473).